Consider the following 257-residue polypeptide: Aspartate/glutamate leucyltransferase (257 aa).

It belongs to the R-transferase family. Bpt subfamily.

The protein localises to the cytoplasm. The enzyme catalyses N-terminal L-glutamyl-[protein] + L-leucyl-tRNA(Leu) = N-terminal L-leucyl-L-glutamyl-[protein] + tRNA(Leu) + H(+). It carries out the reaction N-terminal L-aspartyl-[protein] + L-leucyl-tRNA(Leu) = N-terminal L-leucyl-L-aspartyl-[protein] + tRNA(Leu) + H(+). Functions in the N-end rule pathway of protein degradation where it conjugates Leu from its aminoacyl-tRNA to the N-termini of proteins containing an N-terminal aspartate or glutamate. This is Aspartate/glutamate leucyltransferase from Sphingopyxis alaskensis (strain DSM 13593 / LMG 18877 / RB2256) (Sphingomonas alaskensis).